The sequence spans 94 residues: MAFTAMTVAPSALADLVLAQKSGCTVCHSVEAAIVGPAYKDVAAKYRGDAAAQDRLVAKVMAGGVGNWGQVPMPPNAHVPAADIKALVTWILGL.

An N-terminal signal peptide occupies residues Met-1–Ala-14. Heme c contacts are provided by Cys-24, Cys-27, His-28, and Met-73.

In terms of processing, binds 1 heme c group covalently per subunit.

In terms of biological role, efficiently couple electron transfer between the cytochrome bc1 complex and the photosynthetic reaction center. This is Cytochrome c-551 from Allochromatium vinosum (strain ATCC 17899 / DSM 180 / NBRC 103801 / NCIMB 10441 / D) (Chromatium vinosum).